A 342-amino-acid chain; its full sequence is tRNA dimethylallyltransferase (342 aa).

39 to 46 is a binding site for ATP; that stretch reads GPTGSGKT. A substrate-binding site is contributed by 41 to 46; sequence TGSGKT. The interaction with substrate tRNA stretch occupies residues 64–67; it reads DSMQ.

This sequence belongs to the IPP transferase family. In terms of assembly, monomer. The cofactor is Mg(2+).

It catalyses the reaction adenosine(37) in tRNA + dimethylallyl diphosphate = N(6)-dimethylallyladenosine(37) in tRNA + diphosphate. Its function is as follows. Catalyzes the transfer of a dimethylallyl group onto the adenine at position 37 in tRNAs that read codons beginning with uridine, leading to the formation of N6-(dimethylallyl)adenosine (i(6)A). The protein is tRNA dimethylallyltransferase of Chlamydia caviae (strain ATCC VR-813 / DSM 19441 / 03DC25 / GPIC) (Chlamydophila caviae).